Reading from the N-terminus, the 309-residue chain is MTDQSLSPESGETPTHAGFVAIVGKPNVGKSTLLNAFLNTKVAPTSPRPQTTRRGVRGIYSTDTQQIVFVDTPGLHKPKDALGKYMNQEVQSALADVDAILWVVDLRHPPTEEDELVARQVRDLPKPLFLIGNKVDAAKYPDEAMRLYRALLEGRTGETHERMLSAQNSPQAVAALREQILDALPENPFFFPRSSASDQTREQWAAEIIREEAMKRLREELPYAVATRVTNWTEREDGLQRIEAELIVEKNAHKGMVIGAGGKMLREIGQAARKQLEVFLNCKVFLGLEVIVIPGWREDEEALRELGYE.

The region spanning 16 to 186 (HAGFVAIVGK…REQILDALPE (171 aa)) is the Era-type G domain. Positions 24-31 (GKPNVGKS) are G1. 24 to 31 (GKPNVGKS) contacts GTP. Residues 50–54 (QTTRR) are G2. The interval 71 to 74 (DTPG) is G3. Residues 71–75 (DTPGL) and 133–136 (NKVD) contribute to the GTP site. Residues 133–136 (NKVD) are G4. The interval 164–166 (LSA) is G5. The KH type-2 domain maps to 217 to 294 (LREELPYAVA…FLGLEVIVIP (78 aa)).

It belongs to the TRAFAC class TrmE-Era-EngA-EngB-Septin-like GTPase superfamily. Era GTPase family. Monomer.

It localises to the cytoplasm. The protein localises to the cell membrane. In terms of biological role, an essential GTPase that binds both GDP and GTP, with rapid nucleotide exchange. Plays a role in 16S rRNA processing and 30S ribosomal subunit biogenesis and possibly also in cell cycle regulation and energy metabolism. This is GTPase Era from Deinococcus geothermalis (strain DSM 11300 / CIP 105573 / AG-3a).